Consider the following 368-residue polypeptide: Agmatine deiminase (368 aa).

The Amidino-cysteine intermediate role is filled by Cys-357.

Belongs to the agmatine deiminase family. In terms of assembly, homodimer.

The catalysed reaction is agmatine + H2O = N-carbamoylputrescine + NH4(+). Its pathway is amine and polyamine biosynthesis; putrescine biosynthesis via agmatine pathway; N-carbamoylputrescine from agmatine: step 1/1. In terms of biological role, mediates the hydrolysis of agmatine into N-carbamoylputrescine in the arginine decarboxylase (ADC) pathway of putrescine biosynthesis, a basic polyamine. The polypeptide is Agmatine deiminase (Pseudomonas putida (strain ATCC 700007 / DSM 6899 / JCM 31910 / BCRC 17059 / LMG 24140 / F1)).